A 205-amino-acid chain; its full sequence is Large ribosomal subunit protein uL4 (205 aa).

A disordered region spans residues 56 to 76 (VSGTTAKPYRQKHTGRARQGS).

Belongs to the universal ribosomal protein uL4 family. Part of the 50S ribosomal subunit.

Its function is as follows. One of the primary rRNA binding proteins, this protein initially binds near the 5'-end of the 23S rRNA. It is important during the early stages of 50S assembly. It makes multiple contacts with different domains of the 23S rRNA in the assembled 50S subunit and ribosome. Forms part of the polypeptide exit tunnel. In Ehrlichia ruminantium (strain Welgevonden), this protein is Large ribosomal subunit protein uL4.